A 193-amino-acid chain; its full sequence is ECF RNA polymerase sigma factor SigK (193 aa).

Residues 35 to 101 are sigma-70 factor domain-2; it reads LYDRTRSRVY…RRAVDRVRSE (67 aa). The short motif at 59 to 62 is the Polymerase core binding element; that stretch reads ETTQ. The tract at residues 140 to 187 is sigma-70 factor domain-4; it reads MGSLSDLQREAIQLAYYEGLTYVQVSERLSANLATIKSRMRGGIRGLK. The H-T-H motif DNA-binding region spans 161 to 180; it reads YVQVSERLSANLATIKSRMR.

This sequence belongs to the sigma-70 factor family. ECF subfamily. As to quaternary structure, interacts transiently with the RNA polymerase catalytic core formed by RpoA, RpoB, RpoC and RpoZ (2 alpha, 1 beta, 1 beta' and 1 omega subunit) to form the RNA polymerase holoenzyme that can initiate transcription. Interacts (via sigma-70 factor domain 4) with anti-sigma-K factor RskA.

Its function is as follows. Sigma factors are initiation factors that promote the attachment of RNA polymerase to specific initiation sites and are then released. Extracytoplasmic function (ECF) sigma factors are held in an inactive form by an anti-sigma factor until released by regulated intramembrane proteolysis. This Mycobacterium sp. (strain KMS) protein is ECF RNA polymerase sigma factor SigK (sigK).